The following is a 53-amino-acid chain: Large ribosomal subunit protein uL30 (53 aa).

It belongs to the universal ribosomal protein uL30 family. Part of the 50S ribosomal subunit.

The sequence is that of Large ribosomal subunit protein uL30 from Deinococcus geothermalis (strain DSM 11300 / CIP 105573 / AG-3a).